We begin with the raw amino-acid sequence, 463 residues long: Fumarate hydratase class II (463 aa).

Substrate-binding positions include 98-100 (SGT), 129-132 (HPND), 139-141 (SSN), and threonine 187. The disordered stretch occupies residues 121–141 (KKGGKSPVHPNDHVNKGQSSN). Histidine 188 (proton donor/acceptor) is an active-site residue. Residue serine 318 is part of the active site. Substrate-binding positions include serine 319 and 324 to 326 (KVN).

It belongs to the class-II fumarase/aspartase family. Fumarase subfamily. Homotetramer.

The protein localises to the cytoplasm. The enzyme catalyses (S)-malate = fumarate + H2O. Its pathway is carbohydrate metabolism; tricarboxylic acid cycle; (S)-malate from fumarate: step 1/1. Involved in the TCA cycle. Catalyzes the stereospecific interconversion of fumarate to L-malate. The polypeptide is Fumarate hydratase class II (Rickettsia conorii (strain ATCC VR-613 / Malish 7)).